Reading from the N-terminus, the 273-residue chain is MSILEKITSSPSECAEHLTNKDSCLSKKIQKELTSFLQKKETLGCDSESCVITHPAVKAYAQQKGLDLSKELETRFKAPGPRNNTGLLTNFNIDETLQRWAIKYTKFFNCPFSMMDFERVHYKFNQVDMVKVYKGEELQYVEGKVVKRPCNTFGCVLNTDFSTGTGKHWVAIFVDMRGDCWSIEYFNSAGNAPPGPVIRWMERVKQQLLKIHHTVKTLAVTNIRHQRSQTECGPYSLFYIRARLDNVSYAHFISARITDEDMYKFRTHLFRIA.

Residues histidine 168 and asparagine 187 contribute to the active site. Glutamine 226 contributes to the substrate binding site. Cysteine 232 functions as the Nucleophile in the catalytic mechanism.

The protein belongs to the peptidase C63 family.

It localises to the host cytoplasm. It is found in the virion. Functionally, cysteine protease that plays several role during infection including processing of the structural polyprotein or inhibition of the host immune response. Catalyzes the maturation of the pp220 and pp62 polyprotein precursors into core-shell proteins. Plays a role in the disruption of host pyroptosis via specific cleavage of gasdermin D/GSDMD. In addition, strongly decreases the host cGAS-STING signaling by targeting IKBKE via its enzymatic activity. Also impairs host FOXJ1-mediated antiviral effect via degradation of FOXJ1. The chain is SUMO-1 cysteine protease S273R from Ornithodoros (relapsing fever ticks).